A 214-amino-acid polypeptide reads, in one-letter code: ATP-dependent Clp protease proteolytic subunit (214 aa).

Ser114 serves as the catalytic Nucleophile. The active site involves His139.

It belongs to the peptidase S14 family. Fourteen ClpP subunits assemble into 2 heptameric rings which stack back to back to give a disk-like structure with a central cavity, resembling the structure of eukaryotic proteasomes.

It is found in the cytoplasm. The enzyme catalyses Hydrolysis of proteins to small peptides in the presence of ATP and magnesium. alpha-casein is the usual test substrate. In the absence of ATP, only oligopeptides shorter than five residues are hydrolyzed (such as succinyl-Leu-Tyr-|-NHMec, and Leu-Tyr-Leu-|-Tyr-Trp, in which cleavage of the -Tyr-|-Leu- and -Tyr-|-Trp bonds also occurs).. In terms of biological role, cleaves peptides in various proteins in a process that requires ATP hydrolysis. Has a chymotrypsin-like activity. Plays a major role in the degradation of misfolded proteins. This is ATP-dependent Clp protease proteolytic subunit from Nitrosomonas eutropha (strain DSM 101675 / C91 / Nm57).